The primary structure comprises 405 residues: MDSLVTANTKFCFDLFQEIGKDDRHKNIFFSPLSLSAALGMVRLGARSDSAHQIDEVLHFNEFSQNESKEPDPCLKSNKQKAGSLNNESGLVSCYFGQLLSKLDRIKTDYTLSIANRLYGEQEFPICQEYLDGVIQFYHTTIESVDFQKNPEKSRQEINFWVECQSQGKIKELFSKDAINAETVLVLVNAVYFKAKWETYFDHENTVDAPFCLNANENKSVKMMTQKGLYRIGFIEEVKAQILEMRYTKGKLSMFVLLPSHSKDNLKGLEELERKITYEKMVAWSSSENMSEESVVLSFPRFTLEDSYDLNSILQDMGITDIFDETRADLTGISPSPNLYLSKIIHKTFVEVDENGTQAAAATGAVVSERSLRSWVEFNANHPFLFFIRHNKTQTILFYGRVCSP.

Positions 64-83 (SQNESKEPDPCLKSNKQKAG) are disordered.

This sequence belongs to the serpin family. Ov-serpin subfamily. As to quaternary structure, interacts with SLFN12; as part of a pathway regulating cell differentiation. May interact with USP14. Expressed in many tissues, including brain, bone marrow, lymph node, heart, lung, liver, pancreas, testis, ovary, and intestine.

Its subcellular location is the cytoplasm. Its function is as follows. Inhibits trypsin and plasmin, but not thrombin, coagulation factor Xa, or urokinase-type plasminogen activator. May play a role in cell differentiation. This Homo sapiens (Human) protein is Serpin B12 (SERPINB12).